A 1379-amino-acid chain; its full sequence is MAERANLVFHNKVIDGTAIKRLISRLIDHFGMAYTSHILDQVKTLGFQQATATSISLGIDDLLTIPSKGWLVQDAEQQSWILEKHHHYGNVHAVEKLRQSIEIWYATSEYLRQEMNPNFRMTDPFNPVHMMSFSGARGNASQVHQLVGMRGLMSDPQGQMIDLPIQSNLREGLSLTEYIISCYGARKGVVDTAVRTSDAGYLTRRLVEVVQHIVVRRTDCGTIRGISVSPRNKNRMMSERIFIQTLIGRVLADDIYIGSRCVAFRNQDLGIGLVNGLITSGTQSISIRTPFTCRSTSWICRLCYGRSPTHGDLVELGEAVGIIAGQSIGEPGTQLTLRTFHTGGVFTGGTAEHVRAPYNGKIKFNEDLVHPTRTRHGHPAFLCYIDLSVIIESEDIIHSVTIPPKSFILVQNDQYVESEQVIAEIREGTYTFHFKERVRKYIYSDSEGEMHWSTDVSHAPEFTYSNVHLLPKTSHLWILSGSSCGSSLILFSIHKDQDQMNIPFLSVERKSISSLSVNNDQVSQKFLSSDFADQKKSGIPDYSELNGNLGTSHYNFIYSAIFHKNSDLLAKRRRNRFLIPFQSIQEQEKEFIPHSGISIEIPINGIFRRNSIFAFFDDPRYRRKSSGILKYGTLKADSIIQKEDMIEYRGVQKFKTKYEMKVDRFFFIPEEVHILPESSDIMVQNYSIIGVNTRLTLNIRSQVGGLIRVERKKKRIELKIFSGDIHFPDKTDKISRHSGILLPPGKGKTNSKESKKFKNWIYVQRITPTKKKFFVLVRPVATYEIADSINLATLFPQDLFREKDNIQLRVFNYILYGNGKPTRGISHTSIQLVRTCLVLNWDQDNKNSSLEEVRAFFVEVSTKGLIRDFIRIGLVKSHISYIRKRNNSPDSGLISADHMNPFYSISPKAGILQQSLRQNHGTIRMFLNRNKESQSLLILSSSNCFRMGPFNHVKYHNVINESIKKNPLITIKNSSGPLGTAAQISNFYSFLPLLTYNKISVIKYLQLDNLKDIFQVINSYLIDENGRIFNLDPYSNVVLNPFKLNWYFLHKNYHHNYCEETSTIISLGQFFCENLCIAKKEPQLKSGQVLIVQRDSVVIRAAKPYLATPGAKVHGHYREILYEGDTLVTFIYEKSRSGDITQGLPKVEQVLEVRSIDSISLNLEKRIKGWNKCITRILGIPWGFLIGAELTIVQSRISLVNKIQKVYRSQGVQIHNRHIEIIVRQITSKVLVSEEGMSNVFLPGELIGLLRAERTGRALEEAICYRAVLLGITRASLNTQSFISEASFQETARVLAKAALRGRIDWLKGLKENVVLGGVIPAGTGFNKGLVHCSRQHTNILLEKKTKNFSLFEGDMRDILFYHREFCDSSISKSDFSRI.

Zn(2+) is bound by residues Cys-220, Cys-293, Cys-300, and Cys-303.

The protein belongs to the RNA polymerase beta' chain family. RpoC2 subfamily. In terms of assembly, in plastids the minimal PEP RNA polymerase catalytic core is composed of four subunits: alpha, beta, beta', and beta''. When a (nuclear-encoded) sigma factor is associated with the core the holoenzyme is formed, which can initiate transcription. The cofactor is Zn(2+).

It is found in the plastid. Its subcellular location is the chloroplast. The enzyme catalyses RNA(n) + a ribonucleoside 5'-triphosphate = RNA(n+1) + diphosphate. In terms of biological role, DNA-dependent RNA polymerase catalyzes the transcription of DNA into RNA using the four ribonucleoside triphosphates as substrates. This is DNA-directed RNA polymerase subunit beta'' from Crucihimalaya wallichii (Rock-cress).